We begin with the raw amino-acid sequence, 254 residues long: MKPEESECLCIGVLPARWNSSRYPGKPLAKIHGKSLIQRTYENASQSSLLDKIVVATDDQHIIDHVTDFGGYAVMTSPTCSNGTERTGEVARKYFPKAEIIVNIQGDEPCLNSEVVDALVQKLRSSPEAELVTPVALTTDREEILTEKKVKCVFDSEGRALYFSRSPIPFILKKATPVYLHIGVYAFKREALFRYLQHSSTPLSDAEDLEQLRFLEHGGKIHVCIVDAKSPSVDYPEDIAKVEQYITCLSNAYF.

Belongs to the KdsB family.

It localises to the cytoplasm. It catalyses the reaction 3-deoxy-alpha-D-manno-oct-2-ulosonate + CTP = CMP-3-deoxy-beta-D-manno-octulosonate + diphosphate. It participates in nucleotide-sugar biosynthesis; CMP-3-deoxy-D-manno-octulosonate biosynthesis; CMP-3-deoxy-D-manno-octulosonate from 3-deoxy-D-manno-octulosonate and CTP: step 1/1. It functions in the pathway bacterial outer membrane biogenesis; lipopolysaccharide biosynthesis. Functionally, activates KDO (a required 8-carbon sugar) for incorporation into bacterial lipopolysaccharide in Gram-negative bacteria. This is 3-deoxy-manno-octulosonate cytidylyltransferase from Chlamydia pneumoniae (Chlamydophila pneumoniae).